The chain runs to 247 residues: Probable transcriptional regulatory protein DVU_2259 (247 aa).

The tract at residues 1-22 is disordered; that stretch reads MAGHSKWANIQHRKGRQDAKRG.

This sequence belongs to the TACO1 family.

The protein localises to the cytoplasm. The sequence is that of Probable transcriptional regulatory protein DVU_2259 from Nitratidesulfovibrio vulgaris (strain ATCC 29579 / DSM 644 / CCUG 34227 / NCIMB 8303 / VKM B-1760 / Hildenborough) (Desulfovibrio vulgaris).